The primary structure comprises 550 residues: Hydroxylamine reductase (550 aa).

[2Fe-2S] cluster is bound by residues Cys3, Cys6, Cys18, and Cys25. Positions 249, 273, 317, 405, 433, 458, 492, and 494 each coordinate hybrid [4Fe-2O-2S] cluster. Cys405 is subject to Cysteine persulfide.

Belongs to the HCP family. It depends on [2Fe-2S] cluster as a cofactor. Requires hybrid [4Fe-2O-2S] cluster as cofactor.

The protein resides in the cytoplasm. It catalyses the reaction A + NH4(+) + H2O = hydroxylamine + AH2 + H(+). Functionally, catalyzes the reduction of hydroxylamine to form NH(3) and H(2)O. The sequence is that of Hydroxylamine reductase from Salmonella dublin (strain CT_02021853).